Here is a 111-residue protein sequence, read N- to C-terminus: Ferredoxin, 2Fe-2S (111 aa).

Cys-10, Cys-23, Cys-56, and Cys-60 together coordinate [2Fe-2S] cluster.

Homodimer in solution. The cofactor is [2Fe-2S] cluster.

Functionally, ferredoxins are iron-sulfur proteins that transfer electrons in a wide variety of metabolic reactions. This Aquifex aeolicus (strain VF5) protein is Ferredoxin, 2Fe-2S (fdx4).